The chain runs to 121 residues: Flagellar hook-basal body complex protein FliE (121 aa).

The protein belongs to the FliE family.

The protein localises to the bacterial flagellum basal body. This is Flagellar hook-basal body complex protein FliE from Treponema denticola (strain ATCC 35405 / DSM 14222 / CIP 103919 / JCM 8153 / KCTC 15104).